Reading from the N-terminus, the 143-residue chain is Peptide methionine sulfoxide reductase MsrB (143 aa).

Residues 16–139 enclose the MsrB domain; sequence DAELRRRLTP…NSAALNFESR (124 aa). 4 residues coordinate Zn(2+): Cys-55, Cys-58, Cys-104, and Cys-107. Cys-128 (nucleophile) is an active-site residue.

Belongs to the MsrB Met sulfoxide reductase family. Zn(2+) is required as a cofactor.

It carries out the reaction L-methionyl-[protein] + [thioredoxin]-disulfide + H2O = L-methionyl-(R)-S-oxide-[protein] + [thioredoxin]-dithiol. This is Peptide methionine sulfoxide reductase MsrB from Burkholderia orbicola (strain MC0-3).